The primary structure comprises 179 residues: Large ribosomal subunit protein uL6 (179 aa).

Belongs to the universal ribosomal protein uL6 family. As to quaternary structure, part of the 50S ribosomal subunit.

This protein binds to the 23S rRNA, and is important in its secondary structure. It is located near the subunit interface in the base of the L7/L12 stalk, and near the tRNA binding site of the peptidyltransferase center. In Prochlorococcus marinus (strain NATL2A), this protein is Large ribosomal subunit protein uL6.